A 524-amino-acid chain; its full sequence is Alanine aminotransferase 2 (524 aa).

Lysine 342 is modified (N6-(pyridoxal phosphate)lysine).

The protein belongs to the class-I pyridoxal-phosphate-dependent aminotransferase family. Alanine aminotransferase subfamily. Homodimer. The cofactor is pyridoxal 5'-phosphate.

It carries out the reaction L-alanine + 2-oxoglutarate = pyruvate + L-glutamate. It functions in the pathway amino-acid degradation; L-alanine degradation via transaminase pathway; pyruvate from L-alanine: step 1/1. Its function is as follows. Catalyzes the reversible transamination between alanine and 2-oxoglutarate to form pyruvate and glutamate. The sequence is that of Alanine aminotransferase 2 (gpt2) from Xenopus tropicalis (Western clawed frog).